The following is a 498-amino-acid chain: ATP synthase subunit beta, chloroplastic (498 aa).

172–179 (GGAGVGKT) is a binding site for ATP.

This sequence belongs to the ATPase alpha/beta chains family. In terms of assembly, F-type ATPases have 2 components, CF(1) - the catalytic core - and CF(0) - the membrane proton channel. CF(1) has five subunits: alpha(3), beta(3), gamma(1), delta(1), epsilon(1). CF(0) has four main subunits: a(1), b(1), b'(1) and c(9-12).

The protein localises to the plastid. The protein resides in the chloroplast thylakoid membrane. The enzyme catalyses ATP + H2O + 4 H(+)(in) = ADP + phosphate + 5 H(+)(out). Its function is as follows. Produces ATP from ADP in the presence of a proton gradient across the membrane. The catalytic sites are hosted primarily by the beta subunits. This chain is ATP synthase subunit beta, chloroplastic, found in Agapanthus africanus (Lily of the Nile).